A 70-amino-acid chain; its full sequence is Protein SlyX homolog (70 aa).

It belongs to the SlyX family.

This is Protein SlyX homolog from Pseudoalteromonas atlantica (strain T6c / ATCC BAA-1087).